Here is a 184-residue protein sequence, read N- to C-terminus: Cytidylate kinase (184 aa).

Residue 8-16 (GQPGSGKTT) participates in ATP binding.

This sequence belongs to the cytidylate kinase family. Type 2 subfamily.

The protein resides in the cytoplasm. It catalyses the reaction CMP + ATP = CDP + ADP. The catalysed reaction is dCMP + ATP = dCDP + ADP. This chain is Cytidylate kinase, found in Pyrobaculum calidifontis (strain DSM 21063 / JCM 11548 / VA1).